We begin with the raw amino-acid sequence, 427 residues long: 2-oxoglutarate and iron-dependent oxygenase JMJD4 (427 aa).

The JmjC domain maps to 147–306 (SLVNDLEDIF…NMWHFLQQEL (160 aa)). 3 residues coordinate Fe cation: H194, D196, and H274.

This sequence belongs to the JMJD6 family. In terms of assembly, interacts with ETF1. Interacts with the ETF1-GSPT1 complex. The cofactor is Fe(2+).

It localises to the cytoplasm. It carries out the reaction L-lysyl-[protein] + 2-oxoglutarate + O2 = 4-hydroxy-L-lysyl-[protein] + succinate + CO2. In terms of biological role, catalyzes the 2-oxoglutarate and iron-dependent C4-lysyl hydroxylation of ETF1 at 'Lys-63' thereby promoting the translational termination efficiency of ETF1. Not essential for embryonic stem cell (ESC) maintenance and the embryonic and postnatal development. The sequence is that of 2-oxoglutarate and iron-dependent oxygenase JMJD4 (Jmjd4) from Mus musculus (Mouse).